Reading from the N-terminus, the 456-residue chain is Dual-specificity RNA methyltransferase RlmN (456 aa).

The interval 1-21 is disordered; sequence MIQRHLGQPRLIQNGGDAGGV. Glu175 (proton acceptor) is an active-site residue. Residues 183–416 form the Radical SAM core domain; the sequence is DEERGAVCIS…QDAGYSAPIR (234 aa). Cys190 and Cys427 are disulfide-bonded. The [4Fe-4S] cluster site is built by Cys197, Cys201, and Cys204. S-adenosyl-L-methionine contacts are provided by residues 253–254, Ser285, 307–309, and Asn384; these read GE and SLH. The S-methylcysteine intermediate role is filled by Cys427.

Belongs to the radical SAM superfamily. RlmN family. It depends on [4Fe-4S] cluster as a cofactor.

The protein resides in the cytoplasm. The enzyme catalyses adenosine(2503) in 23S rRNA + 2 reduced [2Fe-2S]-[ferredoxin] + 2 S-adenosyl-L-methionine = 2-methyladenosine(2503) in 23S rRNA + 5'-deoxyadenosine + L-methionine + 2 oxidized [2Fe-2S]-[ferredoxin] + S-adenosyl-L-homocysteine. The catalysed reaction is adenosine(37) in tRNA + 2 reduced [2Fe-2S]-[ferredoxin] + 2 S-adenosyl-L-methionine = 2-methyladenosine(37) in tRNA + 5'-deoxyadenosine + L-methionine + 2 oxidized [2Fe-2S]-[ferredoxin] + S-adenosyl-L-homocysteine. Specifically methylates position 2 of adenine 2503 in 23S rRNA and position 2 of adenine 37 in tRNAs. m2A2503 modification seems to play a crucial role in the proofreading step occurring at the peptidyl transferase center and thus would serve to optimize ribosomal fidelity. The polypeptide is Dual-specificity RNA methyltransferase RlmN (Paramagnetospirillum magneticum (strain ATCC 700264 / AMB-1) (Magnetospirillum magneticum)).